Consider the following 77-residue polypeptide: Small ribosomal subunit protein bS16c (77 aa).

It belongs to the bacterial ribosomal protein bS16 family.

Its subcellular location is the plastid. The protein resides in the chloroplast. The chain is Small ribosomal subunit protein bS16c from Eucalyptus globulus subsp. globulus (Tasmanian blue gum).